Reading from the N-terminus, the 211-residue chain is Protein-L-isoaspartate O-methyltransferase (211 aa).

The active site involves S62.

Belongs to the methyltransferase superfamily. L-isoaspartyl/D-aspartyl protein methyltransferase family.

It localises to the cytoplasm. It carries out the reaction [protein]-L-isoaspartate + S-adenosyl-L-methionine = [protein]-L-isoaspartate alpha-methyl ester + S-adenosyl-L-homocysteine. In terms of biological role, catalyzes the methyl esterification of L-isoaspartyl residues in peptides and proteins that result from spontaneous decomposition of normal L-aspartyl and L-asparaginyl residues. It plays a role in the repair and/or degradation of damaged proteins. The sequence is that of Protein-L-isoaspartate O-methyltransferase from Shewanella loihica (strain ATCC BAA-1088 / PV-4).